The primary structure comprises 213 residues: Orotate phosphoribosyltransferase (213 aa).

Lys26 lines the 5-phospho-alpha-D-ribose 1-diphosphate pocket. 34 to 35 serves as a coordination point for orotate; that stretch reads FF. Residues 72–73, Arg99, Lys100, Lys103, His105, and 124–132 each bind 5-phospho-alpha-D-ribose 1-diphosphate; these read YK and DDVITAGTA. Orotate contacts are provided by Thr128 and Arg156.

The protein belongs to the purine/pyrimidine phosphoribosyltransferase family. PyrE subfamily. Homodimer. The cofactor is Mg(2+).

The enzyme catalyses orotidine 5'-phosphate + diphosphate = orotate + 5-phospho-alpha-D-ribose 1-diphosphate. It participates in pyrimidine metabolism; UMP biosynthesis via de novo pathway; UMP from orotate: step 1/2. In terms of biological role, catalyzes the transfer of a ribosyl phosphate group from 5-phosphoribose 1-diphosphate to orotate, leading to the formation of orotidine monophosphate (OMP). The protein is Orotate phosphoribosyltransferase of Erwinia tasmaniensis (strain DSM 17950 / CFBP 7177 / CIP 109463 / NCPPB 4357 / Et1/99).